The primary structure comprises 289 residues: Cell division protein ZipA (289 aa).

Position 1 (methionine 1) is a topological domain, periplasmic. The helical transmembrane segment at 2-22 threads the bilayer; that stretch reads DIGLREWLIVIGLIVIAGILF. At 23 to 289 the chain is on the cytoplasmic side; it reads DGWRRMRGGK…HERRSLMQKR (267 aa). The segment at 65-141 is disordered; it reads HREPSFDEQD…KEREKAPAVA (77 aa). Residues 81–99 show a composition bias toward basic and acidic residues; it reads RETKERKGGKRQEEPRQGD. Positions 100–114 are enriched in acidic residues; it reads LDLDEGLALEADPSD.

This sequence belongs to the ZipA family. Interacts with FtsZ via their C-terminal domains.

The protein resides in the cell inner membrane. Its function is as follows. Essential cell division protein that stabilizes the FtsZ protofilaments by cross-linking them and that serves as a cytoplasmic membrane anchor for the Z ring. Also required for the recruitment to the septal ring of downstream cell division proteins. This chain is Cell division protein ZipA, found in Pseudomonas aeruginosa (strain UCBPP-PA14).